A 765-amino-acid polypeptide reads, in one-letter code: SNF-related serine/threonine-protein kinase (765 aa).

Residues 16–269 (YDLDKTLGRG…LEEIENHPWL (254 aa)) form the Protein kinase domain. ATP contacts are provided by residues 22 to 30 (LGRGHFAVV) and Lys45. Catalysis depends on Asp139, which acts as the Proton acceptor. Residue Ser162 is modified to Phosphoserine. Residue Thr173 is modified to Phosphothreonine; by LKB1. The UBA domain occupies 291–334 (SEEEHNSIIQRMVLGDIADRDAIVEALETNRYNHITATYFLLAE). Ser362, Ser390, Ser482, Ser495, and Ser518 each carry phosphoserine. The interval 512–634 (LKMNIASPGT…RCAGPSNSMQ (123 aa)) is disordered. The span at 522-532 (VHKRYHRRKSQ) shows a compositional bias: basic residues. The span at 533 to 542 (GRGSSCSSSE) shows a compositional bias: low complexity. The residue at position 534 (Arg534) is an Omega-N-methylarginine. Over residues 549 to 558 (ESRRRLDKDS) the composition is skewed to basic and acidic residues. Gly residues predominate over residues 603–614 (AGGGSPSSGSGG). Residue Ser607 is modified to Phosphoserine.

It belongs to the protein kinase superfamily. CAMK Ser/Thr protein kinase family. Mg(2+) is required as a cofactor. In terms of processing, autophosphorylated. Phosphorylation on Thr-173 by STK11/LKB1 in complex with STE20-related adapter-alpha (STRADA) pseudo kinase and CAB39. In terms of tissue distribution, expressed in hematopoietic progenitor cells and leukemic cell lines. Weakly expressed in the testis.

The protein resides in the nucleus. It catalyses the reaction L-seryl-[protein] + ATP = O-phospho-L-seryl-[protein] + ADP + H(+). The enzyme catalyses L-threonyl-[protein] + ATP = O-phospho-L-threonyl-[protein] + ADP + H(+). Its activity is regulated as follows. Activated by phosphorylation on Thr-173. Its function is as follows. May play a role in hematopoietic cell proliferation or differentiation. Potential mediator of neuronal apoptosis. In Homo sapiens (Human), this protein is SNF-related serine/threonine-protein kinase.